Here is a 75-residue protein sequence, read N- to C-terminus: Small ribosomal subunit protein bS18 (75 aa).

This sequence belongs to the bacterial ribosomal protein bS18 family. As to quaternary structure, part of the 30S ribosomal subunit. Forms a tight heterodimer with protein bS6.

Functionally, binds as a heterodimer with protein bS6 to the central domain of the 16S rRNA, where it helps stabilize the platform of the 30S subunit. The chain is Small ribosomal subunit protein bS18 from Buchnera aphidicola subsp. Schizaphis graminum (strain Sg).